Here is a 481-residue protein sequence, read N- to C-terminus: Phosphoenolpyruvate phosphatase (481 aa).

A signal peptide spans 1–36 (MPIYTSRSCFYLLLFHIILLCSVDKTLCRQTSSFVR). Asparagine 109 carries N-linked (GlcNAc...) asparagine glycosylation. Aspartate 168, aspartate 195, and tyrosine 198 together coordinate Fe cation. Aspartate 195 serves as a coordination point for Zn(2+). Asparagine 206 is a glycosylation site (N-linked (GlcNAc...) asparagine). Residues asparagine 232 and histidine 317 each contribute to the Zn(2+) site. Substrate is bound at residue asparagine 232. Histidine 327 serves as the catalytic Proton donor. A Zn(2+)-binding site is contributed by histidine 354. 354 to 356 (HVH) contributes to the substrate binding site. Fe cation is bound at residue histidine 356. Residues asparagine 370 and asparagine 427 are each glycosylated (N-linked (GlcNAc...) asparagine).

It belongs to the metallophosphoesterase superfamily. Purple acid phosphatase family.

Its subcellular location is the vacuole lumen. The enzyme catalyses phosphoenolpyruvate + H2O = pyruvate + phosphate. Functionally, phosphoenolpyruvate phosphatase that probably operates in the vacuole to release phosphate from phosphoenolpyruvate (PEP) under phosphorus starvation. In Allium cepa (Onion), this protein is Phosphoenolpyruvate phosphatase (ACPEPP).